A 121-amino-acid polypeptide reads, in one-letter code: Large ribosomal subunit protein eL8 (121 aa).

Belongs to the eukaryotic ribosomal protein eL8 family. Part of the 50S ribosomal subunit. Probably part of the RNase P complex.

It is found in the cytoplasm. Its function is as follows. Multifunctional RNA-binding protein that recognizes the K-turn motif in ribosomal RNA, the RNA component of RNase P, box H/ACA, box C/D and box C'/D' sRNAs. The protein is Large ribosomal subunit protein eL8 of Thermoplasma acidophilum (strain ATCC 25905 / DSM 1728 / JCM 9062 / NBRC 15155 / AMRC-C165).